Here is a 104-residue protein sequence, read N- to C-terminus: L-rhamnose mutarotase (104 aa).

Tyrosine 18 contacts substrate. Catalysis depends on histidine 22, which acts as the Proton donor. Substrate contacts are provided by residues tyrosine 41 and 76-77 (WW).

The protein belongs to the rhamnose mutarotase family. In terms of assembly, homodimer.

It is found in the cytoplasm. It carries out the reaction alpha-L-rhamnose = beta-L-rhamnose. Its pathway is carbohydrate metabolism; L-rhamnose metabolism. Functionally, involved in the anomeric conversion of L-rhamnose. This is L-rhamnose mutarotase from Shigella flexneri serotype 5b (strain 8401).